The sequence spans 265 residues: Hydroxyethylthiazole kinase (265 aa).

M50 is a substrate binding site. ATP contacts are provided by R125 and T171. Residue G198 coordinates substrate.

Belongs to the Thz kinase family. The cofactor is Mg(2+).

It carries out the reaction 5-(2-hydroxyethyl)-4-methylthiazole + ATP = 4-methyl-5-(2-phosphooxyethyl)-thiazole + ADP + H(+). Its pathway is cofactor biosynthesis; thiamine diphosphate biosynthesis; 4-methyl-5-(2-phosphoethyl)-thiazole from 5-(2-hydroxyethyl)-4-methylthiazole: step 1/1. Functionally, catalyzes the phosphorylation of the hydroxyl group of 4-methyl-5-beta-hydroxyethylthiazole (THZ). The chain is Hydroxyethylthiazole kinase from Salmonella agona (strain SL483).